A 478-amino-acid chain; its full sequence is Glutamine synthetase (478 aa).

Residue lysine 14 forms an Isoglutamyl lysine isopeptide (Lys-Gln) (interchain with Q-Cter in protein Pup) linkage. Residues 16–100 (ENVEYVDIRF…MNFFVHDPFT (85 aa)) form the GS beta-grasp domain. Residues 108–478 (PRNVARKAEN…PYEFSLYYDV (371 aa)) enclose the GS catalytic domain. Residues glutamate 133 and glutamate 135 each contribute to the Mg(2+) site. Glutamate 214 contacts ATP. The Mg(2+) site is built by glutamate 219 and glutamate 227. 230-232 (YKF) contributes to the ATP binding site. L-glutamate is bound by residues 271 to 272 (NG) and glycine 272. Mg(2+) is bound at residue histidine 276. ATP contacts are provided by residues 278–280 (HQS) and serine 280. Arginine 329, glutamate 335, and arginine 347 together coordinate L-glutamate. The ATP site is built by arginine 347, arginine 352, and lysine 361. Residue glutamate 366 coordinates Mg(2+). Arginine 368 is an L-glutamate binding site. At tyrosine 406 the chain carries O-AMP-tyrosine.

Belongs to the glutamine synthetase family. As to quaternary structure, oligomer of 12 subunits arranged in the form of two hexagons. Requires Mg(2+) as cofactor.

The protein resides in the cytoplasm. The enzyme catalyses L-glutamate + NH4(+) + ATP = L-glutamine + ADP + phosphate + H(+). When cellular nitrogen levels are high, the C-terminal adenylyl transferase (AT) of GlnE inhibits GlnA by covalent transfer of an adenylyl group from ATP to Tyr-406. Conversely, when nitrogen levels are low, the N-terminal adenylyl removase (AR) of GlnE activates GlnA by removing the adenylyl group by phosphorolysis. The fully adenylated enzyme complex is inactive. Functionally, involved in nitrogen metabolism via ammonium assimilation. Catalyzes the ATP-dependent biosynthesis of glutamine from glutamate and ammonia. The protein is Glutamine synthetase of Mycolicibacterium smegmatis (strain ATCC 700084 / mc(2)155) (Mycobacterium smegmatis).